Consider the following 197-residue polypeptide: Non-structural protein 5 (197 aa).

Positions 17 to 30 (IFKNESSSTTSTLS) are enriched in low complexity. A disordered region spans residues 17–36 (IFKNESSSTTSTLSGKSIGR). A Mg(2+)-binding site is contributed by D92.

It belongs to the rotavirus NSP5 family. In terms of assembly, homodimer. Interacts with VP1. Interacts with VP2. Interacts with NSP2; this interaction leads to up-regulation of NSP5 hyperphosphorylation and formation of virus factories. Interacts with NSP6. Participates in the selective exclusion of host proteins from stress granules (SG) and P bodies (PB). Also participates in the sequestration of these remodeled organelles in viral factories. Mg(2+) is required as a cofactor. In terms of processing, O-glycosylated.

Its subcellular location is the host cytoplasm. Plays an essential role in the viral genome replication. Participates, together with NSP2, in the formation of viral factories (viroplasms), which are large inclusions in the host cytoplasm where replication intermediates are assembled and viral RNA replication takes place. Orchestrates the recruitment of viroplasmic proteins such as capsid proteins to these factories. Participates in the selective exclusion of host proteins from stress granules (SG) and P bodies (PB). Also participates in the sequestration of these remodeled organelles in viral factories. This is Non-structural protein 5 from Homo sapiens (Human).